Reading from the N-terminus, the 183-residue chain is Nucleosome assembly protein 1-like 5 (183 aa).

The disordered stretch occupies residues 1–71 (MADSENQGPA…APKPKNDFIE (71 aa)). 2 stretches are compositionally biased toward low complexity: residues 7-21 (QGPA…AAEA) and 28-49 (AEGG…SAAG). The stretch at 81–107 (VLALKKLQKRCDKIEAKFDKEFQALEK) forms a coiled coil. Positions 135 to 161 (EGEEEEEEEYEDDEEEGEEEEEEEEAA) are enriched in acidic residues. A disordered region spans residues 135 to 183 (EGEEEEEEEYEDDEEEGEEEEEEEEAAAEAAAGAKHDDAHAEMPDDAKK). Residues 168 to 183 (AKHDDAHAEMPDDAKK) show a composition bias toward basic and acidic residues.

It belongs to the nucleosome assembly protein (NAP) family.

Its subcellular location is the nucleus. This Pongo abelii (Sumatran orangutan) protein is Nucleosome assembly protein 1-like 5 (NAP1L5).